Consider the following 427-residue polypeptide: Adenylosuccinate synthetase (427 aa).

Residues 12-18 (GDEGKGK) and 40-42 (GHT) contribute to the GTP site. The Proton acceptor role is filled by aspartate 13. 2 residues coordinate Mg(2+): aspartate 13 and glycine 40. IMP is bound by residues 13 to 16 (DEGK), 38 to 41 (NAGH), threonine 128, arginine 142, glutamine 223, threonine 238, and arginine 302. Catalysis depends on histidine 41, which acts as the Proton donor. 298-304 (TTTGRPR) contributes to the substrate binding site. GTP contacts are provided by residues arginine 304, 330–332 (LLD), and 412–414 (SVG).

It belongs to the adenylosuccinate synthetase family. Homodimer. Mg(2+) serves as cofactor.

It localises to the cytoplasm. It carries out the reaction IMP + L-aspartate + GTP = N(6)-(1,2-dicarboxyethyl)-AMP + GDP + phosphate + 2 H(+). It functions in the pathway purine metabolism; AMP biosynthesis via de novo pathway; AMP from IMP: step 1/2. In terms of biological role, plays an important role in the de novo pathway of purine nucleotide biosynthesis. Catalyzes the first committed step in the biosynthesis of AMP from IMP. The chain is Adenylosuccinate synthetase from Alkaliphilus metalliredigens (strain QYMF).